Here is a 454-residue protein sequence, read N- to C-terminus: UDP-N-acetylmuramate--L-alanine ligase (454 aa).

ATP is bound at residue 112–118 (GTHGKTT).

Belongs to the MurCDEF family.

Its subcellular location is the cytoplasm. It carries out the reaction UDP-N-acetyl-alpha-D-muramate + L-alanine + ATP = UDP-N-acetyl-alpha-D-muramoyl-L-alanine + ADP + phosphate + H(+). It functions in the pathway cell wall biogenesis; peptidoglycan biosynthesis. Functionally, cell wall formation. This is UDP-N-acetylmuramate--L-alanine ligase from Oleidesulfovibrio alaskensis (strain ATCC BAA-1058 / DSM 17464 / G20) (Desulfovibrio alaskensis).